The sequence spans 599 residues: Chaperone protein DnaK (599 aa).

A Phosphothreonine; by autocatalysis modification is found at T187. The interval 575–599 is disordered; that stretch reads AQQAATENSKDSDTVEAEIVDDKAN.

Belongs to the heat shock protein 70 family.

In terms of biological role, acts as a chaperone. In Mycoplasmopsis pulmonis (strain UAB CTIP) (Mycoplasma pulmonis), this protein is Chaperone protein DnaK.